A 291-amino-acid polypeptide reads, in one-letter code: MKTGRIVKLISGVYQVDVEGERFDTKPRGLFRKKKFSPVVGDIVDFEVQNTKEGYIHHVHDRNNELKRPPVSNIDELVIVMSAVEPEFSTQLLDRYLVIAHSYHLKPRILITKHDLASEQEILKIKDTIKIYQKIGYATQFIGKDSNYTATVDEWSDGLIVLSGQSGVGKSTFLNSYQPQLKLETNDISKSLNRGKHTTRHVELYDRKGGYIADTPGFSALDFNHIEKEQLKDFFIDIHEAGEQCKFRNCNHIKEPQCHVKALVEKGEIPQFRYDHYQQLYNEISNRKVRY.

In terms of domain architecture, CP-type G spans 63–221 (NNELKRPPVS…IADTPGFSAL (159 aa)). Residues 112 to 115 (TKHD) and 164 to 172 (GQSGVGKST) contribute to the GTP site. 4 residues coordinate Zn(2+): C245, C250, H252, and C258.

Belongs to the TRAFAC class YlqF/YawG GTPase family. RsgA subfamily. As to quaternary structure, monomer. Associates with 30S ribosomal subunit, binds 16S rRNA. Requires Zn(2+) as cofactor.

The protein resides in the cytoplasm. Its function is as follows. One of several proteins that assist in the late maturation steps of the functional core of the 30S ribosomal subunit. Helps release RbfA from mature subunits. May play a role in the assembly of ribosomal proteins into the subunit. Circularly permuted GTPase that catalyzes slow GTP hydrolysis, GTPase activity is stimulated by the 30S ribosomal subunit. This chain is Small ribosomal subunit biogenesis GTPase RsgA, found in Staphylococcus epidermidis (strain ATCC 12228 / FDA PCI 1200).